The sequence spans 86 residues: MVHICRLFVVMGMLLCLSAQFASSQHWSHGWYPGGKREIDVYDSSEVSGEIKLCEAGKCSYLRPQGRNILKTILLDAIIRDSQKRK.

A signal peptide spans 1–24 (MVHICRLFVVMGMLLCLSAQFASS). Pyrrolidone carboxylic acid is present on Gln25. Residue Gly34 is modified to Glycine amide.

This sequence belongs to the GnRH family. In terms of tissue distribution, olfactory bulbs, hypothalamus and telencephalon, midbrain and posterior brain areas.

The protein resides in the secreted. In terms of biological role, stimulates the secretion of gonadotropins. In Carassius auratus (Goldfish), this protein is Progonadoliberin IIA (gnrh2a).